The primary structure comprises 109 residues: Ubiquitin-related modifier 1 homolog (109 aa).

A 1-thioglycine modification is found at Gly-109. A Glycyl lysine isopeptide (Gly-Lys) (interchain with K-? in acceptor proteins) cross-link involves residue Gly-109.

The protein belongs to the URM1 family. Post-translationally, C-terminal thiocarboxylation occurs in 2 steps, it is first acyl-adenylated (-COAMP) via the hesA/moeB/thiF part of the MOCS3 homolog, then thiocarboxylated (-COSH) via the rhodanese domain of the MOCS3 homolog.

The protein localises to the cytoplasm. The protein operates within tRNA modification; 5-methoxycarbonylmethyl-2-thiouridine-tRNA biosynthesis. Its function is as follows. Acts as a sulfur carrier required for 2-thiolation of mcm(5)S(2)U at tRNA wobble positions of cytosolic tRNA(Lys), tRNA(Glu) and tRNA(Gln). Serves as sulfur donor in tRNA 2-thiolation reaction by being thiocarboxylated (-COSH) at its C-terminus by MOCS3. The sulfur is then transferred to tRNA to form 2-thiolation of mcm(5)S(2)U. Also acts as a ubiquitin-like protein (UBL) that is covalently conjugated via an isopeptide bond to lysine residues of target proteins. The thiocarboxylated form serves as substrate for conjugation and oxidative stress specifically induces the formation of UBL-protein conjugates. The protein is Ubiquitin-related modifier 1 homolog of Anopheles gambiae (African malaria mosquito).